A 426-amino-acid polypeptide reads, in one-letter code: Citrate transporter (426 aa).

Helical transmembrane passes span 1–21, 22–42, 59–79, 86–106, 137–157, 176–196, 232–252, 278–298, 318–338, 343–363, 377–397, and 406–426; these read MLAILGFVMMIVFMYLIMSNR, LSALIALIVVPIVFALISGFG, TGIMLLFAILYFGIMIDSGLF, ILSFVKGDPLKIAVGTAVLTM, LVLAGIAMLGSGVMNIIPWGG, PLIPAMIAGILWVIAVAYILG, LLTVALMAALITSLLPLPVLF, AGNALNVVSMVFAAGIFTGIL, AMGPHLPLITAIVSMPFTFFM, FYFGVLPIIAEAASAYGIDAA, LLSPLVPSTYLLVGMAGVSFG, and WAVGTTIVMTIAALLIGIISF.

It belongs to the CitM (TC 2.A.11) transporter family.

It is found in the cell membrane. Transports the free citrate anion. Probably cotransports citrate and at least three or four protons. The citrate uptake is inhibited by the presence of magnesium ions. The sequence is that of Citrate transporter (citN) from Bacillus subtilis (strain 168).